Here is a 544-residue protein sequence, read N- to C-terminus: CTP synthase (544 aa).

The segment at methionine 1–leucine 266 is amidoligase domain. Serine 14 is a CTP binding site. Serine 14 provides a ligand contact to UTP. ATP contacts are provided by residues serine 15–isoleucine 20 and aspartate 72. Residues aspartate 72 and glutamate 140 each coordinate Mg(2+). CTP contacts are provided by residues aspartate 147 to glutamate 149, lysine 187 to glutamine 192, and lysine 223. UTP contacts are provided by residues lysine 187 to glutamine 192 and lysine 223. Residues threonine 291–isoleucine 541 enclose the Glutamine amidotransferase type-1 domain. Glycine 352 is an L-glutamine binding site. Cysteine 379 acts as the Nucleophile; for glutamine hydrolysis in catalysis. Residues leucine 380 to glutamine 383, glutamate 403, and arginine 469 contribute to the L-glutamine site. Active-site residues include histidine 514 and glutamate 516.

This sequence belongs to the CTP synthase family. In terms of assembly, homotetramer.

It catalyses the reaction UTP + L-glutamine + ATP + H2O = CTP + L-glutamate + ADP + phosphate + 2 H(+). The enzyme catalyses L-glutamine + H2O = L-glutamate + NH4(+). The catalysed reaction is UTP + NH4(+) + ATP = CTP + ADP + phosphate + 2 H(+). Its pathway is pyrimidine metabolism; CTP biosynthesis via de novo pathway; CTP from UDP: step 2/2. Allosterically activated by GTP, when glutamine is the substrate; GTP has no effect on the reaction when ammonia is the substrate. The allosteric effector GTP functions by stabilizing the protein conformation that binds the tetrahedral intermediate(s) formed during glutamine hydrolysis. Inhibited by the product CTP, via allosteric rather than competitive inhibition. Its function is as follows. Catalyzes the ATP-dependent amination of UTP to CTP with either L-glutamine or ammonia as the source of nitrogen. Regulates intracellular CTP levels through interactions with the four ribonucleotide triphosphates. The sequence is that of CTP synthase from Buchnera aphidicola subsp. Baizongia pistaciae (strain Bp).